Reading from the N-terminus, the 46-residue chain is DNA-directed RNA polymerases I, II, and III subunit rpabc4 (46 aa).

Positions 7, 10, 24, and 27 each coordinate Zn(2+). The C4-type zinc finger occupies 7–27 (CGECGAEHEIKPKEPVKCKDC).

This sequence belongs to the archaeal Rpo12/eukaryotic RPC10 RNA polymerase subunit family. In terms of assembly, component of the RNA polymerase I (Pol I), RNA polymerase II (Pol II) and RNA polymerase III (Pol III) complexes consisting of at least 13, 12 and 17 subunits, respectively.

It is found in the nucleus. DNA-dependent RNA polymerase catalyzes the transcription of DNA into RNA using the four ribonucleoside triphosphates as substrates. Common component of RNA polymerases I, II and III which synthesize ribosomal RNA precursors, mRNA precursors and many functional non-coding RNAs, and a small RNAs, such as 5S rRNA and tRNAs, respectively. The protein is DNA-directed RNA polymerases I, II, and III subunit rpabc4 (polr2k) of Dictyostelium discoideum (Social amoeba).